Consider the following 154-residue polypeptide: uncharacterized protein (154 aa).

This is an uncharacterized protein from Aquifex aeolicus (strain VF5).